The following is a 22-amino-acid chain: Caerin-3.2 (22 aa).

A Lysine amide modification is found at K22.

As to expression, expressed by the skin parotoid and/or rostral glands.

The protein localises to the secreted. Functionally, antibacterial peptide, that adopts an alpha helical conformation which can disrupt bacterial membranes. Each caerin displays a different antimicrobial specificity. This Ranoidea caerulea (Green tree frog) protein is Caerin-3.2.